The chain runs to 269 residues: MDIMHAAVLGILQGLTEILPISSSAHLILVPWLLGWPESGLTFDVGLHVGTLIALCVYFRRDIAYLISDAITGLREGFGSQTSRLPFFIIAGTVPAAIAGKTLEKPIEEFFRGSHTLIALLLIAFGLLLALADTTGPKRWRMDRVDLRGALLIGLAQCLALIPGVSRSGITITAALFLGFTRDTAARFSFLLSLPIVAGAGILKMGELARHGIPAGELAPLLAGMATSAVSGYLGVALLLRLVQRYSLYPFVWYRLLAGGAVLAYLFAR.

A run of 8 helical transmembrane segments spans residues 1 to 21, 40 to 59, 87 to 107, 117 to 137, 147 to 166, 188 to 208, 220 to 240, and 248 to 268; these read MDIMHAAVLGILQGLTEILPI, GLTFDVGLHVGTLIALCVYF, FFIIAGTVPAAIAGKTLEKPI, LIALLLIAFGLLLALADTTGP, LRGALLIGLAQCLALIPGVS, FSFLLSLPIVAGAGILKMGEL, PLLAGMATSAVSGYLGVALLL, and LYPFVWYRLLAGGAVLAYLFA.

Belongs to the UppP family.

It is found in the cell inner membrane. It catalyses the reaction di-trans,octa-cis-undecaprenyl diphosphate + H2O = di-trans,octa-cis-undecaprenyl phosphate + phosphate + H(+). Functionally, catalyzes the dephosphorylation of undecaprenyl diphosphate (UPP). Confers resistance to bacitracin. The protein is Undecaprenyl-diphosphatase of Geobacter sulfurreducens (strain ATCC 51573 / DSM 12127 / PCA).